The sequence spans 439 residues: Elongation factor Tu, mitochondrial (439 aa).

The tr-type G domain occupies lysine 51 to glutamate 246. Residues glycine 60–threonine 67 are G1. Position 60 to 67 (glycine 60 to threonine 67) interacts with GTP. Positions glycine 101–serine 105 are G2. The interval aspartate 122 to glycine 125 is G3. GTP contacts are provided by residues aspartate 122 to histidine 126 and asparagine 177 to aspartate 180. A G4 region spans residues asparagine 177–aspartate 180. Residues serine 214–leucine 216 are G5.

Belongs to the TRAFAC class translation factor GTPase superfamily. Classic translation factor GTPase family. EF-Tu/EF-1A subfamily.

The protein resides in the mitochondrion. This protein promotes the GTP-dependent binding of aminoacyl-tRNA to the A-site of ribosomes during protein biosynthesis. The sequence is that of Elongation factor Tu, mitochondrial (tuf1) from Schizosaccharomyces pombe (strain 972 / ATCC 24843) (Fission yeast).